The following is a 302-amino-acid chain: Dioxygenase ALT11 (302 aa).

A disordered region spans residues 1-22 (MSSPELPSQMGVPNGHTKLQEV). Residues His-147, Asp-149, and His-223 each contribute to the Fe cation site.

This sequence belongs to the PhyH family. As to quaternary structure, homodimer. It depends on Fe cation as a cofactor.

It functions in the pathway mycotoxin biosynthesis. Its function is as follows. Dioxygenase; part of the gene cluster that mediates the biosynthesis of the host-selective toxins (HSTs) AAL-toxins, sphinganine-analog mycotoxins responsible for Alternaria stem canker on tomato by the tomato pathotype. The biosynthesis starts with the polyketide synthase ALT1-catalyzed C-16 carbon chain assembly from one starter acetyl-CoA unit with malonyl-CoA extender units. ALT1 also selectively transfers methyl groups at the first and the third cycle of chain elongation for AAL toxin. The C-16 polyketide chain is released from the enzyme by a nucleophilic attack of a carbanion, which is derived from R-carbon of glycin by decarboxylation, on the carbonyl carbon of polyketide acyl chain. This step is probably catalyzed by a pyridoxal 5'-phosphate-dependent aminoacyl transferase ALT4. The respective functions of the other enzymes encoded by the cluster have still to be elucidated. The sphingosine N-acyltransferase-like protein ALT7 seems not to act as a resistance/self-tolerance factor against the toxin in the toxin biosynthetic gene cluster, contrary to what is expected. The protein is Dioxygenase ALT11 of Alternaria alternata (Alternaria rot fungus).